A 1017-amino-acid chain; its full sequence is Centriole and centriolar satellite protein OFD1 (1017 aa).

One can recognise a LisH domain in the interval 69 to 101 (LIGASNSLVADHLQRCGYEYSLSVFFPESGLAK). Coiled coils occupy residues 188–557 (PHRS…ENEV) and 626–659 (EFIA…RATQ). The tract at residues 609–666 (PPYVNTATEASSPESDFEFIASSTKAKVRELEQEAERLEKAFRTYYQRATQNPSTSPQ) is mediates homooligomerization. 4 disordered regions span residues 657 to 676 (ATQN…SVNS), 685 to 705 (SSSM…QPLG), 721 to 749 (GSVV…RSLD), and 769 to 801 (LDRV…SFSG). Ser664, Ser670, Ser687, Ser722, Ser737, Ser747, Ser791, and Ser823 each carry phosphoserine. Over residues 722 to 740 (SVVSRPRRTSSSTRLSSTP) the composition is skewed to low complexity. Positions 895–966 (ELHMKERRQR…AHCENTLEKY (72 aa)) form a coiled coil. Over residues 897 to 988 (HMKERRQREE…ADKSSKKSGK (92 aa)) the composition is skewed to basic and acidic residues. The disordered stretch occupies residues 897–1017 (HMKERRQREE…FSHEEPDDMW (121 aa)).

This sequence belongs to the OFD1 family. In terms of assembly, homooligomer. Interacts with LCA5. Interacts with RUVBL1; the interaction is direct and may mediate interaction with the NuA4 histone acetyltransferase complex. Interacts with SDCCAG8; the interaction is direct. Interacts with MAP1LC3B. Interacts with C2CD3; OFD1 may act as a negative regulator of C2CD3. Forms a complex with KIAA0753/OFIP and CEP20/FOR20; the interaction with CEP20 is detected only in the presence of KIAA0753. Interacts with PCM1; this interaction may be mediated by KIAA0753/OFIP. Interacts with TBC1D31; regulates OFD1 activity in cilium assembly. In terms of processing, phosphorylated. Phosphorylation at Ser-737, by the cAMP-dependent protein kinase PKA, triggers ubiquitination and proteasomal degradation of OFD1. Also increases its interaction with TBC1D31 and regulates its function in ciliogenesis. Post-translationally, ubiquitinated by PJA2, upon phosphorylation at Ser-737 by PKA, leads to the proteasomal degradation of OFD1.

It localises to the cytoplasm. Its subcellular location is the cytoskeleton. The protein localises to the microtubule organizing center. It is found in the centrosome. The protein resides in the centriole. It localises to the centriolar satellite. Its subcellular location is the cilium basal body. The protein localises to the nucleus. Its function is as follows. Component of the centrioles controlling mother and daughter centrioles length. Recruits to the centriole IFT88 and centriole distal appendage-specific proteins including CEP164. Involved in the biogenesis of the cilium, a centriole-associated function. The cilium is a cell surface projection found in many vertebrate cells required to transduce signals important for development and tissue homeostasis. Plays an important role in development by regulating Wnt signaling and the specification of the left-right axis. Only OFD1 localized at the centriolar satellites is removed by autophagy, which is an important step in the ciliogenesis regulation. This chain is Centriole and centriolar satellite protein OFD1 (Ofd1), found in Mus musculus (Mouse).